We begin with the raw amino-acid sequence, 252 residues long: Imidazole glycerol phosphate synthase subunit HisF (252 aa).

Residues Asp-11 and Asp-130 contribute to the active site.

This sequence belongs to the HisA/HisF family. As to quaternary structure, heterodimer of HisH and HisF.

The protein resides in the cytoplasm. The catalysed reaction is 5-[(5-phospho-1-deoxy-D-ribulos-1-ylimino)methylamino]-1-(5-phospho-beta-D-ribosyl)imidazole-4-carboxamide + L-glutamine = D-erythro-1-(imidazol-4-yl)glycerol 3-phosphate + 5-amino-1-(5-phospho-beta-D-ribosyl)imidazole-4-carboxamide + L-glutamate + H(+). Its pathway is amino-acid biosynthesis; L-histidine biosynthesis; L-histidine from 5-phospho-alpha-D-ribose 1-diphosphate: step 5/9. Its function is as follows. IGPS catalyzes the conversion of PRFAR and glutamine to IGP, AICAR and glutamate. The HisF subunit catalyzes the cyclization activity that produces IGP and AICAR from PRFAR using the ammonia provided by the HisH subunit. This Bacillus cytotoxicus (strain DSM 22905 / CIP 110041 / 391-98 / NVH 391-98) protein is Imidazole glycerol phosphate synthase subunit HisF.